The chain runs to 457 residues: MALKLFDSLTRNLRELQPSHPDGVFRFYNCGPTVYAPAHIGNFRTFVVNDILRRMLELEFGAPKVKHVRNLTDVDDKTIKRARDEGRPLADVTRQWTDKFHADCAALNCLPPHIEPTATGHIREQVDMIDCLMQKGNAYRAADGSVYFKVSSFSDYGRLSRVKERELQIGSALAGKSQAVDADEKEDGSDFALWKAHKPDDGENSWDSPWGRGRPGWHIECSAMSKKHLGETIDLHTGGVDLLFPHHENEIAQSECCNGVQFSRHWYHSEHLLVDGKKMSKSLGNLYTLDDLKQKGFSPMAVRYALLSGHPRKQLNFTLDSLHAAEKALATLRAYRATLAAGGAAHHVFAPVIAALEDDLNTPAALGALFTIVNRGKGEADVESFDRVMFALGLKLDAPTAPKAEVPAEVTALAEKRWAAKQAKDFATADALRKEIAAAGWSMLDRKDGYSLEPAKK.

A Zn(2+)-binding site is contributed by C30. Positions 32–42 (PTVYAPAHIGN) match the 'HIGH' region motif. Zn(2+) contacts are provided by C221, H246, and E250. A 'KMSKS' region motif is present at residues 278-282 (KMSKS). K281 provides a ligand contact to ATP.

This sequence belongs to the class-I aminoacyl-tRNA synthetase family. Monomer. The cofactor is Zn(2+).

The protein localises to the cytoplasm. It carries out the reaction tRNA(Cys) + L-cysteine + ATP = L-cysteinyl-tRNA(Cys) + AMP + diphosphate. In Opitutus terrae (strain DSM 11246 / JCM 15787 / PB90-1), this protein is Cysteine--tRNA ligase.